Here is a 314-residue protein sequence, read N- to C-terminus: Ribosomal protein L11 methyltransferase (314 aa).

S-adenosyl-L-methionine is bound by residues Thr-161, Gly-182, Asp-204, and Asn-248.

Belongs to the methyltransferase superfamily. PrmA family.

Its subcellular location is the cytoplasm. The catalysed reaction is L-lysyl-[protein] + 3 S-adenosyl-L-methionine = N(6),N(6),N(6)-trimethyl-L-lysyl-[protein] + 3 S-adenosyl-L-homocysteine + 3 H(+). Methylates ribosomal protein L11. This chain is Ribosomal protein L11 methyltransferase, found in Listeria monocytogenes serotype 4a (strain HCC23).